Here is a 487-residue protein sequence, read N- to C-terminus: DNA polymerase delta small subunit (487 aa).

Met-1 bears the N-acetylmethionine mark. Ser-20 carries the phosphoserine modification.

It belongs to the DNA polymerase delta/II small subunit family. In terms of assembly, DNA polymerase delta is a heterotrimer of POL3, POL32 and HYS2.

The protein localises to the nucleus. The catalysed reaction is DNA(n) + a 2'-deoxyribonucleoside 5'-triphosphate = DNA(n+1) + diphosphate. Its function is as follows. DNA polymerase delta (DNA polymerase III) participates in chromosomal DNA replication. It is required during synthesis of the leading and lagging DNA strands at the replication fork and binds at/or near replication origins and moves along DNA with the replication fork. It has 3'-5' proofreading exonuclease activity that correct errors arising during DNA replication. It is also involved in DNA synthesis during DNA repair. The sequence is that of DNA polymerase delta small subunit (POL31) from Saccharomyces cerevisiae (strain ATCC 204508 / S288c) (Baker's yeast).